The following is a 408-amino-acid chain: CinA-like protein (408 aa).

This sequence belongs to the CinA family.

The chain is CinA-like protein from Thermotoga sp. (strain RQ2).